The following is a 200-amino-acid chain: Dual specificity tyrosine-phosphorylation-regulated kinase 1A (200 aa).

Position 41 is a phosphotyrosine; by autocatalysis (tyrosine 41). Residue lysine 58 coordinates ATP. Residue tyrosine 76 is modified to Phosphotyrosine; by autocatalysis. Position 88 is a phosphoserine; by autocatalysis (serine 88). Threonine 122 is subject to Phosphothreonine; by autocatalysis.

Belongs to the protein kinase superfamily. CMGC Ser/Thr protein kinase family. MNB/DYRK subfamily. In terms of assembly, interacts with RAD54L2/ARIP4. Interacts with CRY2. Interacts with RANBP9. Interacts with WDR68. Interacts with SIRT1. Can also autophosphorylate on serine and threonine residues (in vitro). Autophosphorylated on numerous tyrosine residues.

It localises to the nucleus. It carries out the reaction L-tyrosyl-[protein] + ATP = O-phospho-L-tyrosyl-[protein] + ADP + H(+). It catalyses the reaction L-seryl-[protein] + ATP = O-phospho-L-seryl-[protein] + ADP + H(+). The catalysed reaction is L-threonyl-[protein] + ATP = O-phospho-L-threonyl-[protein] + ADP + H(+). The enzyme catalyses [DNA-directed RNA polymerase] + ATP = phospho-[DNA-directed RNA polymerase] + ADP + H(+). Its activity is regulated as follows. Inhibited by RANBP9. In terms of biological role, dual-specificity kinase which possesses both serine/threonine and tyrosine kinase activities. Exhibits a substrate preference for proline at position P+1 and arginine at position P-3. Plays an important role in double-strand breaks (DSBs) repair following DNA damage. Mechanistically, phosphorylates RNF169 and increases its ability to block accumulation of TP53BP1 at the DSB sites thereby promoting homologous recombination repair (HRR). Also acts as a positive regulator of transcription by acting as a CTD kinase that mediates phosphorylation of the CTD (C-terminal domain) of the large subunit of RNA polymerase II (RNAP II) POLR2A. May play a role in a signaling pathway regulating nuclear functions of cell proliferation. Modulates alternative splicing by phosphorylating the splice factor SRSF6. Has pro-survival function and negatively regulates the apoptotic process. Promotes cell survival upon genotoxic stress through phosphorylation of SIRT1. This in turn inhibits p53/TP53 activity and apoptosis. Phosphorylates SEPTIN4, SEPTIN5 and SF3B1 at 'Thr-434'. The chain is Dual specificity tyrosine-phosphorylation-regulated kinase 1A from Oryctolagus cuniculus (Rabbit).